We begin with the raw amino-acid sequence, 118 residues long: Small ribosomal subunit protein uS13 (118 aa).

Residues 94-118 (GLPVRGQRTKTNARTRKGPRKPIKK) form a disordered region.

The protein belongs to the universal ribosomal protein uS13 family. Part of the 30S ribosomal subunit. Forms a loose heterodimer with protein S19. Forms two bridges to the 50S subunit in the 70S ribosome.

In terms of biological role, located at the top of the head of the 30S subunit, it contacts several helices of the 16S rRNA. In the 70S ribosome it contacts the 23S rRNA (bridge B1a) and protein L5 of the 50S subunit (bridge B1b), connecting the 2 subunits; these bridges are implicated in subunit movement. Contacts the tRNAs in the A and P-sites. The polypeptide is Small ribosomal subunit protein uS13 (Erwinia tasmaniensis (strain DSM 17950 / CFBP 7177 / CIP 109463 / NCPPB 4357 / Et1/99)).